A 179-amino-acid polypeptide reads, in one-letter code: MIIPKRYAEALFQLAKEREKINEITQSFNQLIERLRSNEEVFKLLSYPVVDIAEKKQVADELTADLEQEIRDYLKVLIDNKRTDELAEIHDTFLDLVRTEENRTLCEVKTPIPLDEDELKKIQDLLAQMSEGEVEIETTTDESIIGGIVVRIGDRVFDYSLKGQLNSLREQLKKTTITS.

The protein belongs to the ATPase delta chain family. F-type ATPases have 2 components, F(1) - the catalytic core - and F(0) - the membrane proton channel. F(1) has five subunits: alpha(3), beta(3), gamma(1), delta(1), epsilon(1). F(0) has three main subunits: a(1), b(2) and c(10-14). The alpha and beta chains form an alternating ring which encloses part of the gamma chain. F(1) is attached to F(0) by a central stalk formed by the gamma and epsilon chains, while a peripheral stalk is formed by the delta and b chains.

The protein resides in the cell membrane. Functionally, f(1)F(0) ATP synthase produces ATP from ADP in the presence of a proton or sodium gradient. F-type ATPases consist of two structural domains, F(1) containing the extramembraneous catalytic core and F(0) containing the membrane proton channel, linked together by a central stalk and a peripheral stalk. During catalysis, ATP synthesis in the catalytic domain of F(1) is coupled via a rotary mechanism of the central stalk subunits to proton translocation. This protein is part of the stalk that links CF(0) to CF(1). It either transmits conformational changes from CF(0) to CF(1) or is implicated in proton conduction. This Natranaerobius thermophilus (strain ATCC BAA-1301 / DSM 18059 / JW/NM-WN-LF) protein is ATP synthase subunit delta.